The primary structure comprises 148 residues: Large ribosomal subunit protein bL9 (148 aa).

Belongs to the bacterial ribosomal protein bL9 family.

Functionally, binds to the 23S rRNA. In Hydrogenobaculum sp. (strain Y04AAS1), this protein is Large ribosomal subunit protein bL9.